The primary structure comprises 780 residues: 5-methyltetrahydropteroyltriglutamate--homocysteine methyltransferase (780 aa).

5-methyltetrahydropteroyltri-L-glutamate-binding positions include 15–18 (RELK) and Lys-114. L-homocysteine contacts are provided by residues 457 to 459 (IGS) and Glu-510. L-methionine is bound by residues 457–459 (IGS) and Glu-510. Residues 541 to 542 (RC) and Trp-587 contribute to the 5-methyltetrahydropteroyltri-L-glutamate site. Asp-625 contributes to the L-homocysteine binding site. Asp-625 is an L-methionine binding site. Glu-631 contributes to the 5-methyltetrahydropteroyltri-L-glutamate binding site. Residues His-667, Cys-669, and Glu-691 each contribute to the Zn(2+) site. His-720 serves as the catalytic Proton donor. Residue Cys-752 coordinates Zn(2+).

The protein belongs to the vitamin-B12 independent methionine synthase family. Zn(2+) serves as cofactor.

It catalyses the reaction 5-methyltetrahydropteroyltri-L-glutamate + L-homocysteine = tetrahydropteroyltri-L-glutamate + L-methionine. It participates in amino-acid biosynthesis; L-methionine biosynthesis via de novo pathway; L-methionine from L-homocysteine (MetE route): step 1/1. In terms of biological role, catalyzes the transfer of a methyl group from 5-methyltetrahydrofolate to homocysteine resulting in methionine formation. The sequence is that of 5-methyltetrahydropteroyltriglutamate--homocysteine methyltransferase from Nitratidesulfovibrio vulgaris (strain DSM 19637 / Miyazaki F) (Desulfovibrio vulgaris).